We begin with the raw amino-acid sequence, 80 residues long: Adipogenin (80 aa).

Residues 14–34 traverse the membrane as a helical segment; it reads FSFLVFWFCLPVGLLLLLIIW.

The protein belongs to the adipogenin family.

It localises to the membrane. The protein resides in the nucleus. Its function is as follows. Plays a role in stimulating adipocyte differentiation and development. The protein is Adipogenin of Homo sapiens (Human).